We begin with the raw amino-acid sequence, 1905 residues long: Alpha-2-macroglobulin (1905 aa).

An N-terminal signal peptide occupies residues 1-21 (MNKQYFLSLFSTLAVALTLSG). Cys22 carries N-palmitoyl cysteine lipidation. Cys22 is lipidated: S-diacylglycerol cysteine. A cross-link (isoglutamyl cysteine thioester (Cys-Gln)) is located at residues 1438–1441 (CTEQ).

Belongs to the protease inhibitor I39 (alpha-2-macroglobulin) family. Bacterial alpha-2-macroglobulin subfamily.

Its subcellular location is the cell membrane. Its function is as follows. Protects the bacterial cell from host peptidases. This chain is Alpha-2-macroglobulin, found in Pasteurella multocida (strain Pm70).